The sequence spans 540 residues: Transcription termination/antitermination protein NusA (540 aa).

The 71-residue stretch at 144-214 folds into the S1 motif domain; it reads GQVIEARVED…SMWPITLSRS (71 aa). Residues 319–386 enclose the KH domain; it reads DTSIEIVVPA…QGIFGIKKRR (68 aa). A disordered region spans residues 457 to 540; sequence VAAPTPTPAP…KQTFDNFDDL (84 aa). The span at 461-489 shows a compositional bias: pro residues; sequence TPTPAPQPTPAPTKVEPVPPPVSVTPKPI. Positions 512 to 522 are enriched in basic and acidic residues; sequence DDSKTKPEKSS. Residues 523–540 show a composition bias toward polar residues; it reads AKTNTPQTKQTFDNFDDL.

This sequence belongs to the NusA family. In terms of assembly, monomer. Binds directly to the core enzyme of the DNA-dependent RNA polymerase and to nascent RNA.

The protein resides in the cytoplasm. In terms of biological role, participates in both transcription termination and antitermination. The sequence is that of Transcription termination/antitermination protein NusA from Mycoplasma pneumoniae (strain ATCC 29342 / M129 / Subtype 1) (Mycoplasmoides pneumoniae).